The primary structure comprises 255 residues: 5'-nucleotidase SurE (255 aa).

The a divalent metal cation site is built by Asp-8, Asp-9, Ser-39, and Asn-95.

This sequence belongs to the SurE nucleotidase family. It depends on a divalent metal cation as a cofactor.

It is found in the cytoplasm. The enzyme catalyses a ribonucleoside 5'-phosphate + H2O = a ribonucleoside + phosphate. In terms of biological role, nucleotidase that shows phosphatase activity on nucleoside 5'-monophosphates. The sequence is that of 5'-nucleotidase SurE from Thermosipho africanus (strain TCF52B).